Here is a 470-residue protein sequence, read N- to C-terminus: AAA-ATPase At5g40000 (470 aa).

An N-terminal signal peptide occupies residues 1-30 (MMMMGDSFGSIGSSMASLFFLWATIQQIFP). 248–255 (GPPGTGKS) contributes to the ATP binding site.

Belongs to the AAA ATPase family. BCS1 subfamily. Mg(2+) serves as cofactor.

The catalysed reaction is ATP + H2O = ADP + phosphate + H(+). This Arabidopsis thaliana (Mouse-ear cress) protein is AAA-ATPase At5g40000.